The sequence spans 336 residues: Aspartate carbamoyltransferase catalytic subunit (336 aa).

Carbamoyl phosphate-binding residues include Arg72 and Thr73. Lys100 lines the L-aspartate pocket. Positions 122, 155, and 158 each coordinate carbamoyl phosphate. The L-aspartate site is built by Arg188 and Arg242. 2 residues coordinate carbamoyl phosphate: Gly288 and Pro289.

Belongs to the aspartate/ornithine carbamoyltransferase superfamily. ATCase family. Heterododecamer (2C3:3R2) of six catalytic PyrB chains organized as two trimers (C3), and six regulatory PyrI chains organized as three dimers (R2).

The catalysed reaction is carbamoyl phosphate + L-aspartate = N-carbamoyl-L-aspartate + phosphate + H(+). It functions in the pathway pyrimidine metabolism; UMP biosynthesis via de novo pathway; (S)-dihydroorotate from bicarbonate: step 2/3. Its function is as follows. Catalyzes the condensation of carbamoyl phosphate and aspartate to form carbamoyl aspartate and inorganic phosphate, the committed step in the de novo pyrimidine nucleotide biosynthesis pathway. The chain is Aspartate carbamoyltransferase catalytic subunit from Lactobacillus leichmannii.